We begin with the raw amino-acid sequence, 100 residues long: MNRKVTAIALAAIIWATAAQGFLMFKQGRCLCIGPGMKAVKMAEIEKASVIYPSNGCDKVEVIVTMKAHKRQRCLDPRSKQARLIMQAIEKKNFLRRQNM.

The first 21 residues, 1–21 (MNRKVTAIALAAIIWATAAQG), serve as a signal peptide directing secretion. 2 disulfides stabilise this stretch: Cys30–Cys57 and Cys32–Cys74.

This sequence belongs to the intercrine alpha (chemokine CxC) family. As to quaternary structure, interacts with TNFAIP6 (via Link domain).

The protein localises to the secreted. Chemotactic for interleukin-activated T-cells but not unstimulated T-cells, neutrophils or monocytes. Induces calcium release in activated T-cells. Binds to CXCR3. May play an important role in CNS diseases which involve T-cell recruitment. May play a role in skin immune responses. In Mus musculus (Mouse), this protein is C-X-C motif chemokine 11 (Cxcl11).